The following is a 227-amino-acid chain: NAD(P)H-quinone oxidoreductase subunit K, chloroplastic (227 aa).

[4Fe-4S] cluster-binding residues include Cys43, Cys44, Cys108, and Cys139.

The protein belongs to the complex I 20 kDa subunit family. As to quaternary structure, NDH is composed of at least 16 different subunits, 5 of which are encoded in the nucleus. [4Fe-4S] cluster serves as cofactor.

The protein localises to the plastid. It is found in the chloroplast thylakoid membrane. It catalyses the reaction a plastoquinone + NADH + (n+1) H(+)(in) = a plastoquinol + NAD(+) + n H(+)(out). It carries out the reaction a plastoquinone + NADPH + (n+1) H(+)(in) = a plastoquinol + NADP(+) + n H(+)(out). NDH shuttles electrons from NAD(P)H:plastoquinone, via FMN and iron-sulfur (Fe-S) centers, to quinones in the photosynthetic chain and possibly in a chloroplast respiratory chain. The immediate electron acceptor for the enzyme in this species is believed to be plastoquinone. Couples the redox reaction to proton translocation, and thus conserves the redox energy in a proton gradient. The chain is NAD(P)H-quinone oxidoreductase subunit K, chloroplastic from Pelargonium hortorum (Common geranium).